The sequence spans 151 residues: Putative olfactory receptor 13C6 (151 aa).

Residues 1–27 (MVSANQTASVTEFILLGLSAHPKLEKT) lie on the Extracellular side of the membrane. An N-linked (GlcNAc...) asparagine glycan is attached at N5. Residues 28 to 48 (FFVLILLMYLVILLGNGVLIL) form a helical membrane-spanning segment. The Cytoplasmic segment spans residues 49 to 61 (MTVSNSHLHMPMY). A helical membrane pass occupies residues 62–82 (FFLGNLSFLDICYTTSSVPLI). Over 83–100 (LDSFLTPRKTISFSACAV) the chain is Extracellular. The chain crosses the membrane as a helical span at residues 101–121 (QMFLSFAMGATECVLLSMMAF).

Belongs to the G-protein coupled receptor 1 family.

The protein resides in the cell membrane. Functionally, odorant receptor. The sequence is that of Putative olfactory receptor 13C6 from Homo sapiens (Human).